A 223-amino-acid chain; its full sequence is Phosphoribosylformylglycinamidine synthase subunit PurQ (223 aa).

The 221-residue stretch at 3–223 (SAVILLPGLN…LFAGALGITA (221 aa)) folds into the Glutamine amidotransferase type-1 domain. Residue cysteine 87 is the Nucleophile of the active site. Catalysis depends on residues histidine 197 and glutamate 199.

As to quaternary structure, part of the FGAM synthase complex composed of 1 PurL, 1 PurQ and 2 PurS subunits.

The protein localises to the cytoplasm. The catalysed reaction is N(2)-formyl-N(1)-(5-phospho-beta-D-ribosyl)glycinamide + L-glutamine + ATP + H2O = 2-formamido-N(1)-(5-O-phospho-beta-D-ribosyl)acetamidine + L-glutamate + ADP + phosphate + H(+). It carries out the reaction L-glutamine + H2O = L-glutamate + NH4(+). It functions in the pathway purine metabolism; IMP biosynthesis via de novo pathway; 5-amino-1-(5-phospho-D-ribosyl)imidazole from N(2)-formyl-N(1)-(5-phospho-D-ribosyl)glycinamide: step 1/2. In terms of biological role, part of the phosphoribosylformylglycinamidine synthase complex involved in the purines biosynthetic pathway. Catalyzes the ATP-dependent conversion of formylglycinamide ribonucleotide (FGAR) and glutamine to yield formylglycinamidine ribonucleotide (FGAM) and glutamate. The FGAM synthase complex is composed of three subunits. PurQ produces an ammonia molecule by converting glutamine to glutamate. PurL transfers the ammonia molecule to FGAR to form FGAM in an ATP-dependent manner. PurS interacts with PurQ and PurL and is thought to assist in the transfer of the ammonia molecule from PurQ to PurL. This is Phosphoribosylformylglycinamidine synthase subunit PurQ from Brucella abortus biovar 1 (strain 9-941).